The chain runs to 61 residues: Probable tautomerase lmo2564 (61 aa).

Pro2 serves as the catalytic Proton acceptor; via imino nitrogen.

This sequence belongs to the 4-oxalocrotonate tautomerase family.

This Listeria monocytogenes serovar 1/2a (strain ATCC BAA-679 / EGD-e) protein is Probable tautomerase lmo2564.